A 151-amino-acid polypeptide reads, in one-letter code: 3-hydroxyacyl-[acyl-carrier-protein] dehydratase FabZ (151 aa).

H56 is a catalytic residue.

The protein belongs to the thioester dehydratase family. FabZ subfamily.

It localises to the cytoplasm. It carries out the reaction a (3R)-hydroxyacyl-[ACP] = a (2E)-enoyl-[ACP] + H2O. In terms of biological role, involved in unsaturated fatty acids biosynthesis. Catalyzes the dehydration of short chain beta-hydroxyacyl-ACPs and long chain saturated and unsaturated beta-hydroxyacyl-ACPs. The protein is 3-hydroxyacyl-[acyl-carrier-protein] dehydratase FabZ of Nitrobacter winogradskyi (strain ATCC 25391 / DSM 10237 / CIP 104748 / NCIMB 11846 / Nb-255).